A 475-amino-acid chain; its full sequence is Aspartyl/glutamyl-tRNA(Asn/Gln) amidotransferase subunit B (475 aa).

It belongs to the GatB/GatE family. GatB subfamily. As to quaternary structure, heterotrimer of A, B and C subunits.

The enzyme catalyses L-glutamyl-tRNA(Gln) + L-glutamine + ATP + H2O = L-glutaminyl-tRNA(Gln) + L-glutamate + ADP + phosphate + H(+). The catalysed reaction is L-aspartyl-tRNA(Asn) + L-glutamine + ATP + H2O = L-asparaginyl-tRNA(Asn) + L-glutamate + ADP + phosphate + 2 H(+). Functionally, allows the formation of correctly charged Asn-tRNA(Asn) or Gln-tRNA(Gln) through the transamidation of misacylated Asp-tRNA(Asn) or Glu-tRNA(Gln) in organisms which lack either or both of asparaginyl-tRNA or glutaminyl-tRNA synthetases. The reaction takes place in the presence of glutamine and ATP through an activated phospho-Asp-tRNA(Asn) or phospho-Glu-tRNA(Gln). The polypeptide is Aspartyl/glutamyl-tRNA(Asn/Gln) amidotransferase subunit B (Thiobacillus denitrificans (strain ATCC 25259 / T1)).